The chain runs to 252 residues: Zinc finger protein 511 (252 aa).

3 consecutive C2H2-type zinc fingers follow at residues 80-105, 107-130, and 144-169; these read FACQ…HTLH, NVCS…LEWH, and YQCL…VRMH. The tract at residues 177 to 221 is disordered; that stretch reads FDKPKKSRSPASAEAPGDSGERSEGEAMEICSEPVAASPAPAGER. At Arg-240 the chain carries Omega-N-methylarginine.

It belongs to the krueppel C2H2-type zinc-finger protein family.

The protein resides in the nucleus. Functionally, may be involved in transcriptional regulation. This is Zinc finger protein 511 from Homo sapiens (Human).